A 769-amino-acid polypeptide reads, in one-letter code: Glutathione biosynthesis bifunctional protein GshAB (769 aa).

The tract at residues 1–347 (MLDSFKEDPN…QLADENENNI (347 aa)) is glutamate--cysteine ligase. One can recognise an ATP-grasp domain in the interval 514-768 (KLVLAEHDIR…IGDKILDFLF (255 aa)). An ATP-binding site is contributed by 541 to 599 (SLFEDKQIVVKPKSTNYGWGISIFKNKFTLEDYQEALNIAFSYDSSVIIEEFIPGDEFR). 3 residues coordinate Mg(2+): aspartate 721, glutamate 738, and asparagine 740. Positions 721, 738, and 740 each coordinate Mn(2+).

In the N-terminal section; belongs to the glutamate--cysteine ligase type 1 family. Type 2 subfamily. In terms of assembly, monomer. Requires Mg(2+) as cofactor. It depends on Mn(2+) as a cofactor.

It carries out the reaction L-cysteine + L-glutamate + ATP = gamma-L-glutamyl-L-cysteine + ADP + phosphate + H(+). It catalyses the reaction gamma-L-glutamyl-L-cysteine + glycine + ATP = glutathione + ADP + phosphate + H(+). Its pathway is sulfur metabolism; glutathione biosynthesis; glutathione from L-cysteine and L-glutamate: step 1/2. The protein operates within sulfur metabolism; glutathione biosynthesis; glutathione from L-cysteine and L-glutamate: step 2/2. In terms of biological role, synthesizes glutathione from L-glutamate and L-cysteine via gamma-L-glutamyl-L-cysteine. This Listeria monocytogenes serovar 1/2a (strain ATCC BAA-679 / EGD-e) protein is Glutathione biosynthesis bifunctional protein GshAB.